The sequence spans 244 residues: Carboxy-S-adenosyl-L-methionine synthase (244 aa).

S-adenosyl-L-methionine is bound by residues Tyr41, 66 to 68 (GCS), Asn134, and Arg201.

Belongs to the class I-like SAM-binding methyltransferase superfamily. Cx-SAM synthase family. In terms of assembly, homodimer.

It catalyses the reaction prephenate + S-adenosyl-L-methionine = carboxy-S-adenosyl-L-methionine + 3-phenylpyruvate + H2O. Its function is as follows. Catalyzes the conversion of S-adenosyl-L-methionine (SAM) to carboxy-S-adenosyl-L-methionine (Cx-SAM). The protein is Carboxy-S-adenosyl-L-methionine synthase of Cellvibrio japonicus (strain Ueda107) (Pseudomonas fluorescens subsp. cellulosa).